Consider the following 581-residue polypeptide: Proline--tRNA ligase (581 aa).

Belongs to the class-II aminoacyl-tRNA synthetase family. ProS type 1 subfamily. Homodimer.

It is found in the cytoplasm. The catalysed reaction is tRNA(Pro) + L-proline + ATP = L-prolyl-tRNA(Pro) + AMP + diphosphate. In terms of biological role, catalyzes the attachment of proline to tRNA(Pro) in a two-step reaction: proline is first activated by ATP to form Pro-AMP and then transferred to the acceptor end of tRNA(Pro). As ProRS can inadvertently accommodate and process non-cognate amino acids such as alanine and cysteine, to avoid such errors it has two additional distinct editing activities against alanine. One activity is designated as 'pretransfer' editing and involves the tRNA(Pro)-independent hydrolysis of activated Ala-AMP. The other activity is designated 'posttransfer' editing and involves deacylation of mischarged Ala-tRNA(Pro). The misacylated Cys-tRNA(Pro) is not edited by ProRS. The chain is Proline--tRNA ligase from Chlamydia trachomatis serovar D (strain ATCC VR-885 / DSM 19411 / UW-3/Cx).